Consider the following 244-residue polypeptide: Phosphoadenosine 5'-phosphosulfate reductase (244 aa).

The active-site Nucleophile; cysteine thiosulfonate intermediate is Cys239.

This sequence belongs to the PAPS reductase family. CysH subfamily.

Its subcellular location is the cytoplasm. The catalysed reaction is [thioredoxin]-disulfide + sulfite + adenosine 3',5'-bisphosphate + 2 H(+) = [thioredoxin]-dithiol + 3'-phosphoadenylyl sulfate. Its pathway is sulfur metabolism; hydrogen sulfide biosynthesis; sulfite from sulfate: step 3/3. Functionally, catalyzes the formation of sulfite from phosphoadenosine 5'-phosphosulfate (PAPS) using thioredoxin as an electron donor. This chain is Phosphoadenosine 5'-phosphosulfate reductase, found in Klebsiella pneumoniae subsp. pneumoniae (strain ATCC 700721 / MGH 78578).